Here is a 232-residue protein sequence, read N- to C-terminus: tRNA (guanine-N(1)-)-methyltransferase (232 aa).

S-adenosyl-L-methionine-binding positions include Gly112 and 132 to 137; that span reads IGDYVL.

This sequence belongs to the RNA methyltransferase TrmD family. In terms of assembly, homodimer.

It localises to the cytoplasm. It catalyses the reaction guanosine(37) in tRNA + S-adenosyl-L-methionine = N(1)-methylguanosine(37) in tRNA + S-adenosyl-L-homocysteine + H(+). Specifically methylates guanosine-37 in various tRNAs. In Anaplasma phagocytophilum (strain HZ), this protein is tRNA (guanine-N(1)-)-methyltransferase.